The chain runs to 176 residues: Large ribosomal subunit protein uL22 (176 aa).

Positions 113–176 are disordered; the sequence is VVESRPSKDQ…ETSEAKGGSD (64 aa). A compositionally biased stretch (low complexity) spans 136 to 152; sequence SKAAATAPAKKSSASKA. A compositionally biased stretch (basic and acidic residues) spans 159–176; the sequence is TKAESKTSETSEAKGGSD.

Belongs to the universal ribosomal protein uL22 family. Part of the 50S ribosomal subunit.

This protein binds specifically to 23S rRNA; its binding is stimulated by other ribosomal proteins, e.g. L4, L17, and L20. It is important during the early stages of 50S assembly. It makes multiple contacts with different domains of the 23S rRNA in the assembled 50S subunit and ribosome. Its function is as follows. The globular domain of the protein is located near the polypeptide exit tunnel on the outside of the subunit, while an extended beta-hairpin is found that lines the wall of the exit tunnel in the center of the 70S ribosome. The chain is Large ribosomal subunit protein uL22 from Mycobacterium marinum (strain ATCC BAA-535 / M).